The following is a 217-amino-acid chain: Large ribosomal subunit protein bL25 (217 aa).

A disordered region spans residues 178 to 217 (VVAPTEEPTEEEIEAMEGEQQTEEPEVVGESKEDEEKTEE). The span at 184 to 205 (EPTEEEIEAMEGEQQTEEPEVV) shows a compositional bias: acidic residues. Residues 206-217 (GESKEDEEKTEE) show a composition bias toward basic and acidic residues.

The protein belongs to the bacterial ribosomal protein bL25 family. CTC subfamily. In terms of assembly, part of the 50S ribosomal subunit; part of the 5S rRNA/L5/L18/L25 subcomplex. Contacts the 5S rRNA. Binds to the 5S rRNA independently of L5 and L18.

Functionally, this is one of the proteins that binds to the 5S RNA in the ribosome where it forms part of the central protuberance. The sequence is that of Large ribosomal subunit protein bL25 from Staphylococcus aureus (strain MRSA252).